Consider the following 160-residue polypeptide: Probable prefoldin subunit 5 (160 aa).

It belongs to the prefoldin subunit alpha family. In terms of assembly, heterohexamer of two PFD-alpha type and four PFD-beta type subunits.

Functionally, binds specifically to cytosolic chaperonin (c-CPN) and transfers target proteins to it. Binds to nascent polypeptide chain and promotes folding in an environment in which there are many competing pathways for nonnative proteins. The chain is Probable prefoldin subunit 5 (pfdn5) from Dictyostelium discoideum (Social amoeba).